Here is a 206-residue protein sequence, read N- to C-terminus: Ribosomal RNA small subunit methyltransferase G (206 aa).

S-adenosyl-L-methionine-binding positions include Gly73, Leu78, 124 to 125, and Arg139; that span reads VE.

The protein belongs to the methyltransferase superfamily. RNA methyltransferase RsmG family.

Its subcellular location is the cytoplasm. The enzyme catalyses guanosine(527) in 16S rRNA + S-adenosyl-L-methionine = N(7)-methylguanosine(527) in 16S rRNA + S-adenosyl-L-homocysteine. Its function is as follows. Specifically methylates the N7 position of guanine in position 527 of 16S rRNA. The sequence is that of Ribosomal RNA small subunit methyltransferase G from Yersinia enterocolitica serotype O:8 / biotype 1B (strain NCTC 13174 / 8081).